The chain runs to 375 residues: uncharacterized protein (375 aa).

Residues 78–302 (KKIEITSTIH…IFPNIRITSP (225 aa)) form the Radical SAM core domain. 3 residues coordinate [4Fe-4S] cluster: Cys-92, Cys-98, and Cys-101.

Requires [4Fe-4S] cluster as cofactor.

This is an uncharacterized protein from Methanocaldococcus jannaschii (strain ATCC 43067 / DSM 2661 / JAL-1 / JCM 10045 / NBRC 100440) (Methanococcus jannaschii).